The following is a 139-amino-acid chain: Prefoldin subunit alpha (139 aa).

Belongs to the prefoldin subunit alpha family. Heterohexamer of two alpha and four beta subunits.

The protein resides in the cytoplasm. Functionally, molecular chaperone capable of stabilizing a range of proteins. Seems to fulfill an ATP-independent, HSP70-like function in archaeal de novo protein folding. This is Prefoldin subunit alpha from Picrophilus torridus (strain ATCC 700027 / DSM 9790 / JCM 10055 / NBRC 100828 / KAW 2/3).